A 353-amino-acid polypeptide reads, in one-letter code: Protein RecA (353 aa).

ATP is bound at residue 68-75 (GPESSGKT).

It belongs to the RecA family.

It localises to the cytoplasm. Functionally, can catalyze the hydrolysis of ATP in the presence of single-stranded DNA, the ATP-dependent uptake of single-stranded DNA by duplex DNA, and the ATP-dependent hybridization of homologous single-stranded DNAs. It interacts with LexA causing its activation and leading to its autocatalytic cleavage. The sequence is that of Protein RecA from Roseiflexus castenholzii (strain DSM 13941 / HLO8).